The chain runs to 168 residues: G/U mismatch-specific DNA glycosylase (168 aa).

It belongs to the uracil-DNA glycosylase (UDG) superfamily. TDG/mug family. As to quaternary structure, binds DNA as a monomer.

It localises to the cytoplasm. The catalysed reaction is Specifically hydrolyzes mismatched double-stranded DNA and polynucleotides, releasing free uracil.. Functionally, excises ethenocytosine and uracil, which can arise by alkylation or deamination of cytosine, respectively, from the corresponding mispairs with guanine in ds-DNA. It is capable of hydrolyzing the carbon-nitrogen bond between the sugar-phosphate backbone of the DNA and the mispaired base. The complementary strand guanine functions in substrate recognition. Required for DNA damage lesion repair in stationary-phase cells. The polypeptide is G/U mismatch-specific DNA glycosylase (Escherichia coli O9:H4 (strain HS)).